The following is a 60-amino-acid chain: MDRGLTVFVAVHVPDVLLNGWRWRLGAIPPLVCLLAISVVPPSGQRGPVAFRTRVATGAH.

The protein is Protein K12 (K12) of Human herpesvirus 8 type P (isolate GK18) (HHV-8).